The primary structure comprises 611 residues: Chloroplast sensor kinase, chloroplastic (611 aa).

The N-terminal 79 residues, 1-79, are a transit peptide targeting the chloroplast; the sequence is MLLSAIASQT…PGGGETMVAS (79 aa). Positions 17-50 are disordered; the sequence is NLHFSNSIPNPRPSNPSLKLLNASSSSSSSSSSS. The segment covering 40-50 has biased composition (low complexity); sequence SSSSSSSSSSS. A GAF region spans residues 116–300; it reads DFQRLCLEQL…VMDQKTMLLQ (185 aa). C121 contacts [3Fe-4S] cluster. S188 bears the Phosphoserine mark. The 291-residue stretch at 312-602 folds into the Histidine kinase domain; sequence KLVEQIRGPL…RVELWLPAFP (291 aa). Residues 345-380 are a coiled coil; it reads VEDLIVQGDQIKDTLEELQDAVHLTKANIVRHNEEA. Residues 385–402 show a composition bias toward basic and acidic residues; the sequence is NKTHNETRRSKYEHKDPI. The segment at 385 to 420 is disordered; sequence NKTHNETRRSKYEHKDPIDGSQISSTRLSLGSGLDD.

This sequence belongs to the chloroplast sensor kinase protein family. In terms of assembly, self-interacts. Interacts with the plastoquinone analog 2,5-dibromo-3-methyl-5-isopropyl-p-benzoquinone (DBMIB) and with SIGA/SIG1. Requires [3Fe-4S] cluster as cofactor. In terms of processing, autophosphorylated, possibly on tyrosine residues, in photosystem I (PS I) light and in the presence of manganese ions Mn(2+), to a lesser degree, in the presence of calcium ions Ca(2+), but not in the presence of magnesium ions Mg(2+). Dithiothreitol (DTT) stimulates autophosphorylation. Phosphorylated on Ser-188 in vivo after exposure to far-red light (when plastoquinone (PQ) is oxidized). Not phosphorylated under orange light (reduces PQ).

The protein resides in the plastid. It is found in the chloroplast stroma. It catalyses the reaction L-tyrosyl-[protein] + ATP = O-phospho-L-tyrosyl-[protein] + ADP + H(+). Its function is as follows. Sensor kinase that senses the plastoquinone (PQ) redox state involved in stoichiometry adjustment of both photosystems (e.g. long-term adaptation via transcriptional regulation of reaction center genes of photosystems I and II) and state transitions (e.g. short-term adaptation involving reversible post-translational phosphorylation of light-harvesting complex II, LHC II), thus linking photosynthesis with gene expression in chloroplasts. Autophosphorylates, probably on a tyrosine residue. Probably phosphorylates SIGA/SIG1 in response to plastoquinone redox state modification. Reduced PQ suppresses its autophosphorylation activity. Represses expression of a number of chloroplast-encoded genes. The polypeptide is Chloroplast sensor kinase, chloroplastic (Arabidopsis thaliana (Mouse-ear cress)).